Here is a 99-residue protein sequence, read N- to C-terminus: Integration host factor subunit alpha (99 aa).

The interval 52–73 is disordered; it reads FGNFTLRDKPQRPGRNPKTGEE.

Belongs to the bacterial histone-like protein family. In terms of assembly, heterodimer of an alpha and a beta chain.

Its function is as follows. This protein is one of the two subunits of integration host factor, a specific DNA-binding protein that functions in genetic recombination as well as in transcriptional and translational control. This chain is Integration host factor subunit alpha, found in Legionella pneumophila subsp. pneumophila (strain Philadelphia 1 / ATCC 33152 / DSM 7513).